We begin with the raw amino-acid sequence, 426 residues long: Dihydroorotase (426 aa).

Histidine 58 and histidine 60 together coordinate Zn(2+). Residues 60-62 (HLR) and asparagine 92 each bind substrate. Residues aspartate 150, histidine 177, and histidine 230 each contribute to the Zn(2+) site. Residue asparagine 276 participates in substrate binding. Position 303 (aspartate 303) interacts with Zn(2+). The active site involves aspartate 303. Substrate is bound by residues histidine 307 and 321–322 (FG).

It belongs to the metallo-dependent hydrolases superfamily. DHOase family. Class I DHOase subfamily. Requires Zn(2+) as cofactor.

The catalysed reaction is (S)-dihydroorotate + H2O = N-carbamoyl-L-aspartate + H(+). It functions in the pathway pyrimidine metabolism; UMP biosynthesis via de novo pathway; (S)-dihydroorotate from bicarbonate: step 3/3. Catalyzes the reversible cyclization of carbamoyl aspartate to dihydroorotate. The polypeptide is Dihydroorotase (Listeria monocytogenes serotype 4b (strain F2365)).